A 534-amino-acid polypeptide reads, in one-letter code: Probable bifunctional tRNA threonylcarbamoyladenosine biosynthesis protein (534 aa).

Residues 1–325 (MLCLGIEGTA…YRTDEVDVPW (325 aa)) form a kae1 region. Residues His108, His112, and Tyr129 each contribute to the Fe cation site. Residues 129–133 (YVSGG), Asp161, Gly174, Glu178, and Asn258 each bind L-threonylcarbamoyladenylate. Asp286 contributes to the Fe cation binding site. The Protein kinase domain occupies 335–534 (LPPDILAKGA…EIESRGRYTD (200 aa)). ATP is bound by residues 340–348 (LAKGAEANI) and Lys361. Asp451 functions as the Proton acceptor; for kinase activity in the catalytic mechanism.

It in the N-terminal section; belongs to the KAE1 / TsaD family. This sequence in the C-terminal section; belongs to the protein kinase superfamily. Tyr protein kinase family. BUD32 subfamily. Component of the KEOPS complex that consists of Kae1, Bud32, Cgi121 and Pcc1; the whole complex dimerizes. Fe(2+) serves as cofactor.

Its subcellular location is the cytoplasm. It catalyses the reaction L-seryl-[protein] + ATP = O-phospho-L-seryl-[protein] + ADP + H(+). The catalysed reaction is L-threonyl-[protein] + ATP = O-phospho-L-threonyl-[protein] + ADP + H(+). The enzyme catalyses L-threonylcarbamoyladenylate + adenosine(37) in tRNA = N(6)-L-threonylcarbamoyladenosine(37) in tRNA + AMP + H(+). Its function is as follows. Required for the formation of a threonylcarbamoyl group on adenosine at position 37 (t(6)A37) in tRNAs that read codons beginning with adenine. Is a component of the KEOPS complex that is probably involved in the transfer of the threonylcarbamoyl moiety of threonylcarbamoyl-AMP (TC-AMP) to the N6 group of A37. The Kae1 domain likely plays a direct catalytic role in this reaction. The Bud32 domain probably displays kinase activity that regulates Kae1 function. The protein is Probable bifunctional tRNA threonylcarbamoyladenosine biosynthesis protein of Methanothermobacter thermautotrophicus (strain ATCC 29096 / DSM 1053 / JCM 10044 / NBRC 100330 / Delta H) (Methanobacterium thermoautotrophicum).